The primary structure comprises 407 residues: Methylthioribose kinase (407 aa).

ATP contacts are provided by residues Asn40, Lys57, and 111-113; that span reads EDL. Asp229 contributes to the substrate binding site. Residue 246–248 coordinates ATP; sequence DAE. Arg344 is a substrate binding site.

It belongs to the methylthioribose kinase family. As to quaternary structure, homodimer.

The enzyme catalyses 5-(methylsulfanyl)-D-ribose + ATP = 5-(methylsulfanyl)-alpha-D-ribose 1-phosphate + ADP + H(+). The protein operates within amino-acid biosynthesis; L-methionine biosynthesis via salvage pathway; S-methyl-5-thio-alpha-D-ribose 1-phosphate from S-methyl-5'-thioadenosine (hydrolase route): step 2/2. Its function is as follows. Catalyzes the phosphorylation of methylthioribose into methylthioribose-1-phosphate. The sequence is that of Methylthioribose kinase from Yersinia pseudotuberculosis serotype O:1b (strain IP 31758).